Reading from the N-terminus, the 294-residue chain is MTHDTFTGVFPAMTTPFDDEERIDHETLRDHAQRLEAAGVDGLVPVGTTGESATMSHDEHIEVVETVVDAVDDVPVIAGSGSNNTREALELSERAADAGADGLLLISPYYNIPEPEGMETHYRTVADAVDLPQIIYNVPGRTGRNIAVETAVSLAEHENIVGYKAASGDLNRVGEVIERTREENFEVLSGDDALTLPIIAQGGTGCISVSANVEPERTVALVGAALEGDFTRARELQYELGDLFRTLFIETNPIPINEAMDMRDIHSSTMRSPLNPLQPEHREQLREVLADLER.

Residue threonine 49 participates in pyruvate binding. The active-site Proton donor/acceptor is the tyrosine 136. Catalysis depends on lysine 164, which acts as the Schiff-base intermediate with substrate. Isoleucine 207 contributes to the pyruvate binding site.

This sequence belongs to the DapA family. In terms of assembly, homotetramer; dimer of dimers.

It localises to the cytoplasm. It carries out the reaction L-aspartate 4-semialdehyde + pyruvate = (2S,4S)-4-hydroxy-2,3,4,5-tetrahydrodipicolinate + H2O + H(+). The protein operates within amino-acid biosynthesis; L-lysine biosynthesis via DAP pathway; (S)-tetrahydrodipicolinate from L-aspartate: step 3/4. Its function is as follows. Catalyzes the condensation of (S)-aspartate-beta-semialdehyde [(S)-ASA] and pyruvate to 4-hydroxy-tetrahydrodipicolinate (HTPA). This is 4-hydroxy-tetrahydrodipicolinate synthase from Natronomonas pharaonis (strain ATCC 35678 / DSM 2160 / CIP 103997 / JCM 8858 / NBRC 14720 / NCIMB 2260 / Gabara) (Halobacterium pharaonis).